The sequence spans 531 residues: HERV-H LTR-associating protein 1 (531 aa).

The N-terminal stretch at 1–29 (MLGFLSRGPSMKLCMGLACVLSLWNTVSG) is a signal peptide. Residues Asn-79, Asn-143, and Asn-161 are each glycosylated (N-linked (GlcNAc...) asparagine). 2 disordered regions span residues 231–289 (GTAR…RPPE) and 340–362 (EKKP…GTEE). Composition is skewed to polar residues over residues 232-269 (TART…SSPW) and 349-362 (ETRS…GTEE).

The protein localises to the secreted. The chain is HERV-H LTR-associating protein 1 (HHLA1) from Homo sapiens (Human).